A 102-amino-acid polypeptide reads, in one-letter code: Small ribosomal subunit protein uS10 (102 aa).

The protein belongs to the universal ribosomal protein uS10 family. As to quaternary structure, part of the 30S ribosomal subunit.

In terms of biological role, involved in the binding of tRNA to the ribosomes. The polypeptide is Small ribosomal subunit protein uS10 (Clostridium perfringens (strain ATCC 13124 / DSM 756 / JCM 1290 / NCIMB 6125 / NCTC 8237 / Type A)).